Reading from the N-terminus, the 204-residue chain is ATP-dependent Clp protease proteolytic subunit (204 aa).

Serine 102 functions as the Nucleophile in the catalytic mechanism. Residue histidine 127 is part of the active site.

Belongs to the peptidase S14 family. In terms of assembly, fourteen ClpP subunits assemble into 2 heptameric rings which stack back to back to give a disk-like structure with a central cavity, resembling the structure of eukaryotic proteasomes.

Its subcellular location is the cytoplasm. It carries out the reaction Hydrolysis of proteins to small peptides in the presence of ATP and magnesium. alpha-casein is the usual test substrate. In the absence of ATP, only oligopeptides shorter than five residues are hydrolyzed (such as succinyl-Leu-Tyr-|-NHMec, and Leu-Tyr-Leu-|-Tyr-Trp, in which cleavage of the -Tyr-|-Leu- and -Tyr-|-Trp bonds also occurs).. Its function is as follows. Cleaves peptides in various proteins in a process that requires ATP hydrolysis. Has a chymotrypsin-like activity. Plays a major role in the degradation of misfolded proteins. In Neisseria meningitidis serogroup A / serotype 4A (strain DSM 15465 / Z2491), this protein is ATP-dependent Clp protease proteolytic subunit.